Consider the following 31-residue polypeptide: L-amino-acid oxidase (31 aa).

It belongs to the flavin monoamine oxidase family. FIG1 subfamily. Homodimer; non-covalently linked. FAD is required as a cofactor. In terms of processing, N-glycosylated. Expressed by the venom gland.

The protein resides in the secreted. It catalyses the reaction an L-alpha-amino acid + O2 + H2O = a 2-oxocarboxylate + H2O2 + NH4(+). The enzyme catalyses L-leucine + O2 + H2O = 4-methyl-2-oxopentanoate + H2O2 + NH4(+). The catalysed reaction is L-phenylalanine + O2 + H2O = 3-phenylpyruvate + H2O2 + NH4(+). It carries out the reaction L-histidine + O2 + H2O = 3-(imidazol-5-yl)pyruvate + H2O2 + NH4(+). Its function is as follows. Catalyzes an oxidative deamination of predominantly hydrophobic and aromatic L-amino acids, thus producing hydrogen peroxide that may contribute to the diverse toxic effects of this enzyme. Is moderately active on L-Leu, L-His, and L-Phe, and very weakly active on L-Thr, and L-Cys. Exhibits diverse biological activities, such as hemorrhage, hemolysis, edema, antibacterial and antiparasitic activities, as well as regulation of platelet aggregation. Its effect on platelets is controversial, since it either induces aggregation or inhibits agonist-induced aggregation. These different effects are probably due to different experimental conditions. Inhibits growth of B.subtilis strain ATCC 6633 (MIC=32 uM), E.faecalis strain ATCC 12953 (MIC=32 uM), S.aureus strain ATCC 29213 (MIC=32 uM), S.pyogenes strain ATCC 19615 (MIC=8 uM), E.coli strain ATCC 8739 (MIC=4 uM), K.pneumoniae strain ATCC 13885 (MIC=2 uM), P.mirabilis strain ATCC 25933 (MIC=2 uM), P.aeruginosa strain ATCC 15442 (MIC=8 uM) and S.typhimurium strain ATCC 14028 (MIC=8 uM). In Bothrops mattogrossensis (Pitviper), this protein is L-amino-acid oxidase.